The sequence spans 215 residues: Probable GTP-binding protein EngB (215 aa).

Residues 30 to 204 (TGIEVAFAGR…RQKLDTWFSE (175 aa)) enclose the EngB-type G domain. GTP contacts are provided by residues 38–45 (GRSNAGKS), 65–69 (GRTQL), 83–86 (DLPG), 150–153 (TKAD), and 183–185 (FSS). Mg(2+)-binding residues include Ser-45 and Thr-67.

This sequence belongs to the TRAFAC class TrmE-Era-EngA-EngB-Septin-like GTPase superfamily. EngB GTPase family. Mg(2+) is required as a cofactor.

In terms of biological role, necessary for normal cell division and for the maintenance of normal septation. The polypeptide is Probable GTP-binding protein EngB (Escherichia coli O1:K1 / APEC).